The sequence spans 427 residues: Serine--tRNA ligase (427 aa).

232–234 is a binding site for L-serine; sequence TAE. 263-265 lines the ATP pocket; sequence RSE. An L-serine-binding site is contributed by Glu-286. 350–353 contributes to the ATP binding site; it reads EISS. Ser-385 is a binding site for L-serine.

It belongs to the class-II aminoacyl-tRNA synthetase family. Type-1 seryl-tRNA synthetase subfamily. As to quaternary structure, homodimer. The tRNA molecule binds across the dimer.

The protein resides in the cytoplasm. The catalysed reaction is tRNA(Ser) + L-serine + ATP = L-seryl-tRNA(Ser) + AMP + diphosphate + H(+). It catalyses the reaction tRNA(Sec) + L-serine + ATP = L-seryl-tRNA(Sec) + AMP + diphosphate + H(+). Its pathway is aminoacyl-tRNA biosynthesis; selenocysteinyl-tRNA(Sec) biosynthesis; L-seryl-tRNA(Sec) from L-serine and tRNA(Sec): step 1/1. In terms of biological role, catalyzes the attachment of serine to tRNA(Ser). Is also able to aminoacylate tRNA(Sec) with serine, to form the misacylated tRNA L-seryl-tRNA(Sec), which will be further converted into selenocysteinyl-tRNA(Sec). The chain is Serine--tRNA ligase from Lacticaseibacillus casei (strain BL23) (Lactobacillus casei).